The following is a 1073-amino-acid chain: Serine/threonine-protein kinase 11-interacting protein (1073 aa).

LRR repeat units lie at residues 166 to 187 (ELQT…LQLL), 189 to 210 (ALRV…LTTL), 212 to 233 (ELEY…GIFS), 236 to 257 (KLLT…EQLV), 258 to 279 (NLQH…APLS), and 283 to 304 (YLKK…RSAT). 4 disordered regions span residues 389–409 (VKVR…SQAL), 455–533 (SRSA…EKPE), 724–817 (EVSS…QGMK), and 834–859 (MGSY…SEET). Positions 515–532 (REEEADELMLGEEEDEKP) are enriched in acidic residues. Polar residues-rich tracts occupy residues 779–788 (MDTSNSTRTP) and 843–859 (RGPT…SEET).

Belongs to the STK11IP family.

It is found in the cytoplasm. This chain is Serine/threonine-protein kinase 11-interacting protein (STK11IP), found in Gallus gallus (Chicken).